The chain runs to 92 residues: MLCSIYKSPKKEGTYLYIPKRDDFSQVPDTLKQMFGKPIFVMLVNLEQRRLAQVNVEKVKQSMQEQGFFLQLPPPPENLLEQHKERKARQTP.

One can recognise a YcgL domain in the interval 1-84 (MLCSIYKSPK…PPENLLEQHK (84 aa)). The tract at residues 69 to 92 (FLQLPPPPENLLEQHKERKARQTP) is disordered.

The chain is YcgL domain-containing protein VC_1957 from Vibrio cholerae serotype O1 (strain ATCC 39315 / El Tor Inaba N16961).